We begin with the raw amino-acid sequence, 193 residues long: UMP-CMP kinase (193 aa).

13–18 (GAGKGT) is an ATP binding site. Residues 33–63 (SAGDLLRDERKKPDSQYGELIESYIRDGKIV) form an NMP region. A ribonucleoside 5'-phosphate is bound by residues R39, 61-63 (KIV), and 93-96 (GFPR). N100 is a CMP binding site. The LID stretch occupies residues 133 to 143 (ERGKSSGRSDD). Residue R134 coordinates ATP. 2 residues coordinate a ribonucleoside 5'-phosphate: R140 and R151. K179 lines the ATP pocket.

This sequence belongs to the adenylate kinase family. UMP-CMP kinase subfamily. In terms of assembly, monomer. Mg(2+) serves as cofactor.

Its subcellular location is the nucleus. The protein resides in the cytoplasm. It catalyses the reaction CMP + ATP = CDP + ADP. The catalysed reaction is dCMP + ATP = dCDP + ADP. The enzyme catalyses UMP + ATP = UDP + ADP. It carries out the reaction a 2'-deoxyribonucleoside 5'-diphosphate + ATP = a 2'-deoxyribonucleoside 5'-triphosphate + ADP. It catalyses the reaction a ribonucleoside 5'-diphosphate + ATP = a ribonucleoside 5'-triphosphate + ADP. Its function is as follows. Catalyzes the phosphorylation of pyrimidine nucleoside monophosphates at the expense of ATP. Plays an important role in de novo pyrimidine nucleotide biosynthesis. Has preference for UMP and CMP as phosphate acceptors. Also displays broad nucleoside diphosphate kinase activity. The polypeptide is UMP-CMP kinase (cmpk1) (Xenopus laevis (African clawed frog)).